We begin with the raw amino-acid sequence, 254 residues long: 5'-nucleotidase SurE (254 aa).

Residues aspartate 8, aspartate 9, serine 40, and asparagine 93 each contribute to the a divalent metal cation site.

Belongs to the SurE nucleotidase family. Requires a divalent metal cation as cofactor.

Its subcellular location is the cytoplasm. The catalysed reaction is a ribonucleoside 5'-phosphate + H2O = a ribonucleoside + phosphate. Functionally, nucleotidase that shows phosphatase activity on nucleoside 5'-monophosphates. The polypeptide is 5'-nucleotidase SurE (Methylorubrum populi (strain ATCC BAA-705 / NCIMB 13946 / BJ001) (Methylobacterium populi)).